The primary structure comprises 506 residues: Anaerobic nitric oxide reductase transcription regulator NorR (506 aa).

Position 57 is a 4-aspartylphosphate (aspartate 57). A Sigma-54 factor interaction domain is found at 187-416 (MIGLSPAMTQ…LEHAIHRAVV (230 aa)). ATP contacts are provided by residues 215–222 (GETGTGKE) and 278–287 (ADNGTLFLDE). Positions 481–500 (WAASARALETDVANLHRLAK) form a DNA-binding region, H-T-H motif.

It functions in the pathway nitrogen metabolism; nitric oxide reduction. Required for the expression of anaerobic nitric oxide (NO) reductase, acts as a transcriptional activator for at least the norVW operon. Activation also requires sigma-54. This chain is Anaerobic nitric oxide reductase transcription regulator NorR, found in Salmonella dublin (strain CT_02021853).